A 150-amino-acid chain; its full sequence is SsrA-binding protein (150 aa).

The protein belongs to the SmpB family.

The protein localises to the cytoplasm. Its function is as follows. Required for rescue of stalled ribosomes mediated by trans-translation. Binds to transfer-messenger RNA (tmRNA), required for stable association of tmRNA with ribosomes. tmRNA and SmpB together mimic tRNA shape, replacing the anticodon stem-loop with SmpB. tmRNA is encoded by the ssrA gene; the 2 termini fold to resemble tRNA(Ala) and it encodes a 'tag peptide', a short internal open reading frame. During trans-translation Ala-aminoacylated tmRNA acts like a tRNA, entering the A-site of stalled ribosomes, displacing the stalled mRNA. The ribosome then switches to translate the ORF on the tmRNA; the nascent peptide is terminated with the 'tag peptide' encoded by the tmRNA and targeted for degradation. The ribosome is freed to recommence translation, which seems to be the essential function of trans-translation. In Borreliella burgdorferi (strain ATCC 35210 / DSM 4680 / CIP 102532 / B31) (Borrelia burgdorferi), this protein is SsrA-binding protein.